The following is a 745-amino-acid chain: Junction plakoglobin (745 aa).

M1 is subject to N-acetylmethionine. Residue T14 is glycosylated (O-linked (GlcNAc) threonine). 2 positions are modified to phosphoserine: S99 and S125. ARM repeat units follow at residues N132–K171, K172–H215, R216–L255, E258–Y297, G298–C341, P342–D381, A383–C420, S423–S464, E470–L510, P512–T551, P574–Q613, and K615–R661. An interaction with DSC1 and DSG1 region spans residues N132 to Y297. S182 carries the post-translational modification Phosphoserine. The segment at P574–R661 is interaction with DSC1. A phosphoserine mark is found at S665 and S730.

This sequence belongs to the beta-catenin family. As to quaternary structure, homodimer. Component of an E-cadherin/catenin adhesion complex composed of at least E-cadherin/CDH1 and gamma-catenin/JUP, and possibly alpha-catenin/CTNNA1; the complex is located to adherens junctions. The stable association of CTNNA1 is controversial as CTNNA1 was shown not to bind to F-actin when assembled in the complex. Interacts with MUC1. Interacts with CAV1. Interacts with PTPRJ. Interacts with DSG1. Interacts with DSC1 and DSC2. Interacts with PKP2. Interacts with PKP3 (via N-terminus); the interaction is required for PKP3 localization to desmosome cell-cell junctions. Interacts with DSG4. May be phosphorylated by FER. As to expression, expressed in the heart (at protein level).

It localises to the cell junction. Its subcellular location is the adherens junction. The protein localises to the desmosome. It is found in the cytoplasm. The protein resides in the cytoskeleton. It localises to the cell membrane. Its subcellular location is the nucleus. Its function is as follows. Common junctional plaque protein. The membrane-associated plaques are architectural elements in an important strategic position to influence the arrangement and function of both the cytoskeleton and the cells within the tissue. The presence of plakoglobin in both the desmosomes and in the intermediate junctions suggests that it plays a central role in the structure and function of submembranous plaques. Acts as a substrate for VE-PTP and is required by it to stimulate VE-cadherin function in endothelial cells. Can replace beta-catenin in E-cadherin/catenin adhesion complexes which are proposed to couple cadherins to the actin cytoskeleton. This Homo sapiens (Human) protein is Junction plakoglobin.